A 400-amino-acid polypeptide reads, in one-letter code: MGAPLSTTRRGMGQNLSVPNPLGFLPDHQLDPLFRANSSSPDWDFNTNKDSWPMANKVGVGGYGPGFTPPHGGLLGWSPQAQGVLTTLPADPPPASTNRLSGRKPTQVSPPLRDTHPQAMQWNSTHFHQALLDPRVRALYFPAGGSSSGTQNPAPTIASLTSSISSKTGGPAMNMENITSGLLGPLRVLQAVCFLLTKILTIPQSLDSWWTSLNFLGGLPRCPGQNSQSPTSNHLPTSCPPTCPGYRWMCLRRFIIFLFILLLCLIFLLVLLDYQGMLPVCPLLPGSTTTSTGPCKTCTALAQGTSMFPSCCCSKPSDGNCTCIPIPSSWALGKYLWEWASARFSWLSLLVQFVQWCVGLSPTVWLLVIWMIWYWGPNLCSILSPFIPLLPIFCYLWVSI.

At methionine 1 the chain carries N-acetylmethionine. Glycine 2 is lipidated: N-myristoyl glycine; by host. Residues 2 to 119 (GAPLSTTRRG…PPLRDTHPQA (118 aa)) form a pre-S1 region. Positions 2–174 (GAPLSTTRRG…SSKTGGPAMN (173 aa)) are pre-S. Residues 2 to 181 (GAPLSTTRRG…AMNMENITSG (180 aa)) lie on the Virion surface; in external conformation side of the membrane. At 2–253 (GAPLSTTRRG…PGYRWMCLRR (252 aa)) the chain is on the intravirion; in internal conformation side. Residue proline 4 is glycosylated (N-linked (GlcNAc...) asparagine). The disordered stretch occupies residues 84–110 (VLTTLPADPPPASTNRLSGRKPTQVSP). Positions 96 to 109 (STNRLSGRKPTQVS) are enriched in polar residues. The tract at residues 120-174 (MQWNSTHFHQALLDPRVRALYFPAGGSSSGTQNPAPTIASLTSSISSKTGGPAMN) is pre-S2. Residues 182-202 (LLGPLRVLQAVCFLLTKILTI) traverse the membrane as a helical segment. Residues 203 to 253 (PQSLDSWWTSLNFLGGLPRCPGQNSQSPTSNHLPTSCPPTCPGYRWMCLRR) lie on the Intravirion; in external conformation side of the membrane. The helical transmembrane segment at 254–274 (FIIFLFILLLCLIFLLVLLDY) threads the bilayer. The Virion surface segment spans residues 275 to 348 (QGMLPVCPLL…WASARFSWLS (74 aa)). An N-linked (GlcNAc...) asparagine; by host glycan is attached at asparagine 320. A helical transmembrane segment spans residues 349 to 369 (LLVQFVQWCVGLSPTVWLLVI). Residues 370-375 (WMIWYW) are Intravirion-facing. The helical transmembrane segment at 376–398 (GPNLCSILSPFIPLLPIFCYLWV) threads the bilayer. The Virion surface segment spans residues 399-400 (SI).

Belongs to the orthohepadnavirus major surface antigen family. In its internal form (Li-HBsAg), interacts with the capsid protein and with the isoform S. Interacts with host chaperone CANX. In terms of assembly, associates with host chaperone CANX through its pre-S2 N glycan; this association may be essential for isoform M proper secretion. As to quaternary structure, interacts with isoform L. Interacts with the antigens of satellite virus HDV (HDVAgs); this interaction is required for encapsidation of HDV genomic RNA. Isoform M is N-terminally acetylated by host at a ratio of 90%, and N-glycosylated by host at the pre-S2 region. Post-translationally, myristoylated.

The protein resides in the virion membrane. In terms of biological role, the large envelope protein exists in two topological conformations, one which is termed 'external' or Le-HBsAg and the other 'internal' or Li-HBsAg. In its external conformation the protein attaches the virus to cell receptors and thereby initiating infection. This interaction determines the species specificity and liver tropism. This attachment induces virion internalization predominantly through caveolin-mediated endocytosis. The large envelope protein also assures fusion between virion membrane and endosomal membrane. In its internal conformation the protein plays a role in virion morphogenesis and mediates the contact with the nucleocapsid like a matrix protein. Functionally, the middle envelope protein plays an important role in the budding of the virion. It is involved in the induction of budding in a nucleocapsid independent way. In this process the majority of envelope proteins bud to form subviral lipoprotein particles of 22 nm of diameter that do not contain a nucleocapsid. The sequence is that of Large envelope protein from Homo sapiens (Human).